The sequence spans 140 residues: uncharacterized protein (140 aa).

This sequence belongs to the MG067/MG068/MG395 family.

This is an uncharacterized protein from Mycoplasma pneumoniae (strain ATCC 29342 / M129 / Subtype 1) (Mycoplasmoides pneumoniae).